Reading from the N-terminus, the 455-residue chain is ADP-dependent glucose/glucosamine kinase (455 aa).

The ADPK domain occupies 2 to 455 (PTWEELYKNA…AFIGEFSFTL (454 aa)). Residues Asp34, Glu88, 112-113 (GQ), and His176 each bind D-glucose. Residue Glu195 coordinates ADP. Glu266 lines the Mg(2+) pocket. ADP is bound at residue Asn292. Mg(2+) is bound at residue Glu295. ADP-binding positions include 342 to 343 (HT), Val429, and Gly439. Residue Asp440 coordinates D-glucose. A Mg(2+)-binding site is contributed by Asp440. Asp440 (proton acceptor) is an active-site residue.

Belongs to the ADP-dependent glucokinase family. In terms of assembly, homodimer. Mg(2+) serves as cofactor.

Its subcellular location is the cytoplasm. It catalyses the reaction D-glucose + ADP = D-glucose 6-phosphate + AMP + H(+). It carries out the reaction D-glucosamine + ADP = D-glucosamine 6-phosphate + AMP + H(+). The protein operates within carbohydrate degradation; glycolysis. Functionally, catalyzes the ADP-dependent phosphorylation of D-glucose to D-glucose 6-phosphate and glucosamine to glucosamine 6-phosphate. Can also use CDP as the phosphoryl group donor and D-1,5-anhydroglucitol as the phosphoryl group acceptor. In Pyrococcus furiosus (strain ATCC 43587 / DSM 3638 / JCM 8422 / Vc1), this protein is ADP-dependent glucose/glucosamine kinase.